The primary structure comprises 266 residues: 2-C-methyl-D-erythritol 4-phosphate cytidylyltransferase (266 aa).

Residues 229 to 266 form a disordered region; that stretch reads NRDCGPGTRDPESAHPQSSVSASAFSGPGSRAPGPEEI. Residues 243–252 are compositionally biased toward polar residues; sequence HPQSSVSASA.

This sequence belongs to the IspD/TarI cytidylyltransferase family. IspD subfamily.

The catalysed reaction is 2-C-methyl-D-erythritol 4-phosphate + CTP + H(+) = 4-CDP-2-C-methyl-D-erythritol + diphosphate. It functions in the pathway isoprenoid biosynthesis; isopentenyl diphosphate biosynthesis via DXP pathway; isopentenyl diphosphate from 1-deoxy-D-xylulose 5-phosphate: step 2/6. Catalyzes the formation of 4-diphosphocytidyl-2-C-methyl-D-erythritol from CTP and 2-C-methyl-D-erythritol 4-phosphate (MEP). The chain is 2-C-methyl-D-erythritol 4-phosphate cytidylyltransferase from Xanthomonas axonopodis pv. citri (strain 306).